The sequence spans 424 residues: Histidine--tRNA ligase (424 aa).

Belongs to the class-II aminoacyl-tRNA synthetase family. In terms of assembly, homodimer.

It is found in the cytoplasm. The enzyme catalyses tRNA(His) + L-histidine + ATP = L-histidyl-tRNA(His) + AMP + diphosphate + H(+). This Salmonella paratyphi A (strain ATCC 9150 / SARB42) protein is Histidine--tRNA ligase.